Consider the following 345-residue polypeptide: N-acetyl-gamma-glutamyl-phosphate reductase (345 aa).

The active site involves C149.

Belongs to the NAGSA dehydrogenase family. Type 1 subfamily.

It localises to the cytoplasm. The catalysed reaction is N-acetyl-L-glutamate 5-semialdehyde + phosphate + NADP(+) = N-acetyl-L-glutamyl 5-phosphate + NADPH + H(+). The protein operates within amino-acid biosynthesis; L-arginine biosynthesis; N(2)-acetyl-L-ornithine from L-glutamate: step 3/4. Functionally, catalyzes the NADPH-dependent reduction of N-acetyl-5-glutamyl phosphate to yield N-acetyl-L-glutamate 5-semialdehyde. This is N-acetyl-gamma-glutamyl-phosphate reductase from Marinobacter nauticus (strain ATCC 700491 / DSM 11845 / VT8) (Marinobacter aquaeolei).